The primary structure comprises 71 residues: Mitochondrial import protein 1 (71 aa).

A helical transmembrane segment spans residues 22–44 (YAAINLGLPFLNGVMLGFGEIFA).

The protein belongs to the MIM1 family. In terms of assembly, component of the mitochondrial outer import machinery (MIM) complex containing at least mim1 and mim2. Interacts with mim2. Interacts with mitophagy receptor atg43.

The protein resides in the mitochondrion outer membrane. Component of the mitochondrial outer import machinery (MIM) complex that mediates transport of proteins into mitochondrial compartments. Promotes the insertion of tom70 into the outer mitochondrial membrane. Promotes the insertion of atg43 into the outer mitochondrial membrane. The MIM complex cooperates with the receptor tom70 in binding of precursor proteins and promotes their insertion and assembly into the outer membrane. Involved in import of the subset of proteins with multiple alpha-helical transmembrane segments. Required for the assembly of the TOM (translocase of outer membrane) receptor complex, which is responsible for the recognition and translocation of cytosolically synthesized mitochondrial preproteins. The sequence is that of Mitochondrial import protein 1 from Schizosaccharomyces pombe (strain 972 / ATCC 24843) (Fission yeast).